The primary structure comprises 56 residues: Large ribosomal subunit protein bL33A (56 aa).

It belongs to the bacterial ribosomal protein bL33 family.

This chain is Large ribosomal subunit protein bL33A, found in Sorangium cellulosum (strain So ce56) (Polyangium cellulosum (strain So ce56)).